The following is a 661-amino-acid chain: SUMO-activating enzyme subunit 2 (661 aa).

ATP-binding positions include 29–34, aspartate 53, 61–64, lysine 77, and 122–127; these read GAGGIG, NLNR, and DNISAR. Zn(2+)-binding residues include cysteine 163 and cysteine 166. Catalysis depends on cysteine 178, which acts as the Glycyl thioester intermediate. Residues cysteine 436 and cysteine 439 each coordinate Zn(2+). The disordered stretch occupies residues 545–661; the sequence is KKQQQKEKDQ…SKKLKSNLQD (117 aa). The segment covering 548-563 has biased composition (basic and acidic residues); the sequence is QQKEKDQKEGKTTTIE. 2 stretches are compositionally biased toward low complexity: residues 577-607 and 623-634; these read TSQT…NNNN and SSTTTSSATPSI.

It belongs to the ubiquitin-activating E1 family. In terms of assembly, heterodimer of sae1 and sae2. The complex binds sumo via sae2.

Its subcellular location is the nucleus. It functions in the pathway protein modification; protein sumoylation. In terms of biological role, the dimeric enzyme acts as an E1 ligase for sumo. It mediates ATP-dependent activation of sumo and formation of a thioester with a conserved cysteine residue on sae2. The chain is SUMO-activating enzyme subunit 2 (uba2) from Dictyostelium discoideum (Social amoeba).